Reading from the N-terminus, the 413-residue chain is Corticotropin-releasing factor receptor 2 (413 aa).

Residues 1 to 22 constitute a signal peptide (not cleaved); it reads MDSTIFEIIIDEFDANCSLLDA. At 1-110 the chain is on the extracellular side; sequence MDSTIFEIII…CVPILDNKRK (110 aa). N-linked (GlcNAc...) asparagine glycosylation is present at asparagine 16. Intrachain disulfides connect cysteine 17–cysteine 53, cysteine 43–cysteine 86, and cysteine 67–cysteine 101. Residues asparagine 77, asparagine 89, and asparagine 97 are each glycosylated (N-linked (GlcNAc...) asparagine). Residues 111–141 form a helical membrane-spanning segment; the sequence is YALHYKIALIINYLGHCISILALVIAFLLFL. Residues 142–148 are Cytoplasmic-facing; it reads CLRSIRC. The chain crosses the membrane as a helical span at residues 149–173; the sequence is LRNIIHWNLITTFILRNIMWFLLQM. Residues 174–187 are Extracellular-facing; that stretch reads IDHNIHESNEVWCR. Cysteine 186 and cysteine 256 are joined by a disulfide. A helical transmembrane segment spans residues 188 to 216; it reads CITTIYNYFVVTNFFWMFVEGCYLHTAIV. The Cytoplasmic portion of the chain corresponds to 217–223; it reads MTYSTDK. A helical membrane pass occupies residues 224–251; that stretch reads LRKWVFLFIGWCIPSPIIVTWAICKLFY. Over 252–267 the chain is Extracellular; sequence ENEQCWIGKEPGKYID. The chain crosses the membrane as a helical span at residues 268–293; sequence YIYQGRVILVLLINFVFLFNIVRILM. The Cytoplasmic portion of the chain corresponds to 294-304; it reads TKLRASTTSET. Residues 305-329 form a helical membrane-spanning segment; it reads IQYRKAVKATLVLLPLLGITYMLFF. Residues 330–336 lie on the Extracellular side of the membrane; it reads VNPGEDD. A helical transmembrane segment spans residues 337 to 366; the sequence is VSQIVFIYFNSFLQSFQGFFVSVFYCFLNG. Residues 367 to 413 lie on the Cytoplasmic side of the membrane; that stretch reads EVRSAARKRWHRWQDHHSLRVRVARAMSIPTSPTRISFHSIKQTAAV.

The protein belongs to the G-protein coupled receptor 2 family. An N-glycosylation site within the signal peptide impedes its proper cleavage and function.

The protein resides in the cell membrane. In terms of biological role, G-protein coupled receptor for CRH (corticotropin-releasing factor), UCN (urocortin), UCN2 and UCN3. Has high affinity for UCN. Ligand binding causes a conformation change that triggers signaling via guanine nucleotide-binding proteins (G proteins) and down-stream effectors, such as adenylate cyclase. Promotes the activation of adenylate cyclase, leading to increased intracellular cAMP levels. The sequence is that of Corticotropin-releasing factor receptor 2 (crhr2) from Xenopus laevis (African clawed frog).